Consider the following 154-residue polypeptide: Deoxyuridine 5'-triphosphate nucleotidohydrolase (154 aa).

Residues 64–66, N77, 81–83, and K91 each bind substrate; these read RSG and TVD. Residues 135–154 are disordered; that stretch reads LADTTRGDGGHGSSGGHASL. Residues 144 to 154 are compositionally biased toward gly residues; it reads GHGSSGGHASL.

Belongs to the dUTPase family. In terms of assembly, homotrimer. The cofactor is Mg(2+).

It carries out the reaction dUTP + H2O = dUMP + diphosphate + H(+). Its pathway is pyrimidine metabolism; dUMP biosynthesis; dUMP from dCTP (dUTP route): step 2/2. This enzyme is involved in nucleotide metabolism: it produces dUMP, the immediate precursor of thymidine nucleotides and it decreases the intracellular concentration of dUTP so that uracil cannot be incorporated into DNA. The sequence is that of Deoxyuridine 5'-triphosphate nucleotidohydrolase from Mycolicibacterium vanbaalenii (strain DSM 7251 / JCM 13017 / BCRC 16820 / KCTC 9966 / NRRL B-24157 / PYR-1) (Mycobacterium vanbaalenii).